The primary structure comprises 558 residues: Potassium-transporting ATPase potassium-binding subunit (558 aa).

The next 12 helical transmembrane spans lie at 1-21 (MEIILFLTMMVMITYVFSGYL), 66-86 (FNGFMGFITFVLLIVQQWLFL), 127-147 (MIVMTYLMFTSSASGYAVCIA), 166-186 (IVRFIVRVLLPLSCLISILLM), 245-265 (IWSNFIEMGSMMLLPMSMLFL), 281-301 (ALILFVAMFFIFIAILTLTMW), 327-347 (FGAGLSALFTVITTAFTTGSV), 354-374 (LTPLGGLGPMVLMMLNVVFGG), 377-397 (VGLMNLLIYVLLTVFICSLMV), 416-436 (IVLVFLIHPILILVFSALAFM), 482-502 (ISTGIIMLLSRYIPIILQLMI), and 531-551 (IVFIVLLSGLTFIPVLLLGPI).

It belongs to the KdpA family. The system is composed of three essential subunits: KdpA, KdpB and KdpC.

The protein localises to the cell membrane. Its function is as follows. Part of the high-affinity ATP-driven potassium transport (or Kdp) system, which catalyzes the hydrolysis of ATP coupled with the electrogenic transport of potassium into the cytoplasm. This subunit binds the extracellular potassium ions and delivers the ions to the membrane domain of KdpB through an intramembrane tunnel. The protein is Potassium-transporting ATPase potassium-binding subunit of Staphylococcus aureus (strain MSSA476).